Reading from the N-terminus, the 539-residue chain is 2,3-bisphosphoglycerate-independent phosphoglycerate mutase (539 aa).

Aspartate 37 and serine 86 together coordinate Mn(2+). The active site involves serine 86. Substrate is bound by residues histidine 147, 177-178 (RD), arginine 210, arginine 216, 284-287 (RADR), and lysine 359. The Mn(2+) site is built by aspartate 426, histidine 430, aspartate 467, histidine 468, and histidine 485.

It belongs to the BPG-independent phosphoglycerate mutase family. Requires Mg(2+) as cofactor. The cofactor is Mn(2+). In terms of tissue distribution, expressed ubiquitously. High expression levels in the nerve ring region, intestine and body wall muscles.

The catalysed reaction is (2R)-2-phosphoglycerate = (2R)-3-phosphoglycerate. It participates in carbohydrate degradation; glycolysis; pyruvate from D-glyceraldehyde 3-phosphate: step 3/5. With respect to regulation, activity is not affected by 2,3-bisphosphoglycerate. Catalyzes the interconversion of 2-phosphoglycerate and 3-phosphoglycerate. The polypeptide is 2,3-bisphosphoglycerate-independent phosphoglycerate mutase (Caenorhabditis elegans).